Consider the following 68-residue polypeptide: Pleurocidin (68 aa).

The N-terminal stretch at 1 to 22 (MKFTATFLMMAIFVLMVEPGEC) is a signal peptide. Residues 48 to 68 (GDKQELNKRAVDEDPNVIVFE) constitute a propeptide that is removed on maturation.

This sequence belongs to the pleurocidin family. In terms of tissue distribution, goblet cells.

The protein localises to the secreted. The protein resides in the membrane. Functionally, antimicrobial peptide with potent activity against Gram-positive and Gram-negative bacteria. Activity against E.coli and B.subtilis. Weaker activity against L.mucor, s.marcescens and P.aeruginosa. May play a role in innate host defense. The protein is Pleurocidin (ple1) of Pseudopleuronectes americanus (Winter flounder).